A 231-amino-acid chain; its full sequence is Large ribosomal subunit protein uL1 (231 aa).

It belongs to the universal ribosomal protein uL1 family. Part of the 50S ribosomal subunit.

In terms of biological role, binds directly to 23S rRNA. The L1 stalk is quite mobile in the ribosome, and is involved in E site tRNA release. Protein L1 is also a translational repressor protein, it controls the translation of the L11 operon by binding to its mRNA. This is Large ribosomal subunit protein uL1 from Acinetobacter baylyi (strain ATCC 33305 / BD413 / ADP1).